We begin with the raw amino-acid sequence, 246 residues long: 3'(2'),5'-bisphosphate nucleotidase CysQ (246 aa).

Mg(2+)-binding residues include Glu64, Asp83, Leu85, Asp86, and Asp205. Substrate is bound at residue Glu64. Substrate contacts are provided by residues Leu85 to Thr88 and Asp205.

This sequence belongs to the inositol monophosphatase superfamily. CysQ family. Mg(2+) serves as cofactor.

It is found in the cell inner membrane. It catalyses the reaction adenosine 3',5'-bisphosphate + H2O = AMP + phosphate. Its function is as follows. Converts adenosine-3',5'-bisphosphate (PAP) to AMP. The polypeptide is 3'(2'),5'-bisphosphate nucleotidase CysQ (Shigella flexneri).